Here is a 248-residue protein sequence, read N- to C-terminus: ATP synthase subunit a, chloroplastic (248 aa).

A run of 5 helical transmembrane segments spans residues 38–58 (QVLITSWVVIAILLGSAAIAV), 96–116 (VPFIGTLFLFIFVSNWSGALL), 135–155 (INTTVALALPTSVAYFYAGLT), 200–220 (LVVVVLVSLVPLVIPIPVMFL), and 221–241 (GLFTSGIQALIFATLAAAYIG).

The protein belongs to the ATPase A chain family. F-type ATPases have 2 components, CF(1) - the catalytic core - and CF(0) - the membrane proton channel. CF(1) has five subunits: alpha(3), beta(3), gamma(1), delta(1), epsilon(1). CF(0) has four main subunits: a, b, b' and c.

The protein localises to the plastid. Its subcellular location is the chloroplast thylakoid membrane. Functionally, key component of the proton channel; it plays a direct role in the translocation of protons across the membrane. The polypeptide is ATP synthase subunit a, chloroplastic (Nymphaea alba (White water-lily)).